Consider the following 301-residue polypeptide: Glycine--tRNA ligase alpha subunit (301 aa).

The protein belongs to the class-II aminoacyl-tRNA synthetase family. As to quaternary structure, tetramer of two alpha and two beta subunits.

Its subcellular location is the cytoplasm. It carries out the reaction tRNA(Gly) + glycine + ATP = glycyl-tRNA(Gly) + AMP + diphosphate. The chain is Glycine--tRNA ligase alpha subunit from Nitrosospira multiformis (strain ATCC 25196 / NCIMB 11849 / C 71).